A 134-amino-acid polypeptide reads, in one-letter code: Small ribosomal subunit protein uS8c (134 aa).

This sequence belongs to the universal ribosomal protein uS8 family. In terms of assembly, part of the 30S ribosomal subunit.

The protein localises to the plastid. Its subcellular location is the chloroplast. Its function is as follows. One of the primary rRNA binding proteins, it binds directly to 16S rRNA central domain where it helps coordinate assembly of the platform of the 30S subunit. The protein is Small ribosomal subunit protein uS8c (rps8) of Coffea arabica (Arabian coffee).